A 66-amino-acid polypeptide reads, in one-letter code: Alpha-actitoxin-Ms11a-2 (66 aa).

A signal peptide spans 1 to 24; that stretch reads MASKIFFVLAVFLVMSAVLPESFA. 3 disulfide bridges follow: Cys-26-Cys-41, Cys-33-Cys-46, and Cys-40-Cys-61.

The protein localises to the secreted. Its subcellular location is the nematocyst. In terms of biological role, alpha-toxins act on postsynaptic membranes, they bind to the nicotinic acetylcholine receptors (nAChR) and thus inhibit them. This toxin competes with alpha-bungarotoxin for binding to orthosteric sites on muscle-type T.carlifornicus (IC(50)=1080 nM) and human alpha-7/CHRNA7 nAChRs (IC(50)=14.13 uM). This chain is Alpha-actitoxin-Ms11a-2, found in Metridium senile (Brown sea anemone).